A 377-amino-acid chain; its full sequence is Chorismate synthase (377 aa).

NADP(+)-binding residues include Arg48 and Arg54. Residues 125–127 (RSS), 238–239 (NA), Gly278, 293–297 (KPTSS), and Arg319 contribute to the FMN site.

This sequence belongs to the chorismate synthase family. Homotetramer. It depends on FMNH2 as a cofactor.

It carries out the reaction 5-O-(1-carboxyvinyl)-3-phosphoshikimate = chorismate + phosphate. Its pathway is metabolic intermediate biosynthesis; chorismate biosynthesis; chorismate from D-erythrose 4-phosphate and phosphoenolpyruvate: step 7/7. Its function is as follows. Catalyzes the anti-1,4-elimination of the C-3 phosphate and the C-6 proR hydrogen from 5-enolpyruvylshikimate-3-phosphate (EPSP) to yield chorismate, which is the branch point compound that serves as the starting substrate for the three terminal pathways of aromatic amino acid biosynthesis. This reaction introduces a second double bond into the aromatic ring system. In Aromatoleum aromaticum (strain DSM 19018 / LMG 30748 / EbN1) (Azoarcus sp. (strain EbN1)), this protein is Chorismate synthase.